Here is a 712-residue protein sequence, read N- to C-terminus: MTGIDLNTVEEDEEEAAEEVAANGSSPAPARAGAVCLELWHACAGPVAPLPRKGGVVVYLPQGHLEHLGDAPAAAAAAAAVPPHVFCRVVDVTLLADAATDEVYAQLSLVPEKEEVARRADDGEGEDGDGMKQRFARMPHMFCKTLTASDTSTHGGFSVPRRAAEDCFPPLDYSQQRPSQELVAKDLHSTEWRFRHIYRGQPRRHLLTTGWSAFVNKKKLVSGDAVLFLRGDDGELRLGVRRAAQLKNGSAFPALYNQCSNLGTLANVAHAVATESVFNIYYNPRLSQSEFIVPYWKFMKSLSQPFSVGLRFKMRYESEDATERRYTGIITGSGDTDPMWHGSKWKCLLVRWDDDAEFRRPNRVSPWEIELTSSVSGSHLSTPHSKRLKPCLPHVNPEYMVPRGGGCPDFAESAQFHKVLQGQELLGFKSHGGTAAATSQPCEARHLQYIDERSCSSDASNSILGVPRLGDRAPLGNPGFSYHCSGFGESHRLQKVLQGQELFRPYRGTLVDASMGSNGFHQQDSPRAPGVVNKWQAQLHGRAAFHGPPALALPSQSSSPPSVLMFQQANSKMPRLEFGHGQLDKHENDRRVRFGPSEGIERREQRIPLQPYPTSGEVIDGQVTVEKSHSPGRHGKDGPDNKAVGTNSCKIFGISLTEKVPAREELDDGDANYSLQSLKQVPKSLGNSCATVHEQRPVVGRVIDISTMDMMI.

A DNA-binding region (TF-B3) is located at residues 142–244; that stretch reads FCKTLTASDT…ELRLGVRRAA (103 aa).

Belongs to the ARF family. In terms of assembly, homo and heterodimers. Expressed in roots, culms, leaves and young panicles.

The protein resides in the nucleus. Functionally, auxin response factors (ARFs) are transcriptional factors that bind specifically to the DNA sequence 5'-TGTCTC-3' found in the auxin-responsive promoter elements (AuxREs). The chain is Auxin response factor 15 (ARF15) from Oryza sativa subsp. japonica (Rice).